A 474-amino-acid polypeptide reads, in one-letter code: MSIRAPPRLLELARQRLLRDQALAISTMEELPRELFPTLFMEAFSRRRCETLKTMVQAWPFTRLPLGSLMKSPHLESLKSVLEGVDVLLTQEVRPRQSKLQVLDLRNVDENFCDIFSGATASFPEALSQKQTADNCPGTGRQQPFMVFIDLCLKNRTLDECLTHLLEWGKQRKGLLHVCCKELQVFGMPIHSIIEVLNMVELDCIQEVEVCCPWELSTLVKFAPYLGQMRNLRKLVLFNIRASACIPPDNKGQFIARFTSQFLKLDYFQNLSMHSVSFLEGHLDQLLRCLQASLEMVVMTDCLLSESDLKHLSWCPSIRQLKELDLRGVTLTHFSPEPLTGLLEQAVATLQTLDLEDCGIMDSQLSAILPVLSRCSQLSTFSFCGNLISMAALENLLRHTVGLSKLSLELYPAPLESYDTQGALCWGRFAELGAELMNTLRDLRQPKIIVFCTVPCPRCGIRASYDLEPSHCLC.

Residues Q97–S122 form an LRR 1; degenerate repeat. The LRR 2; degenerate repeat unit spans residues H177 to E201. An LRR 3; degenerate repeat occupies L202–Q228. One copy of the LRR 4; degenerate repeat lies at M229–K264. LRR repeat units lie at residues L265–L290, Q291–K322, E323–G341, V347–R374, and C375–H399.

It belongs to the PRAME family.

The polypeptide is PRAME family member 7 (Homo sapiens (Human)).